The primary structure comprises 360 residues: Putative beta-glucosidase 15 (360 aa).

Basic and acidic residues-rich tracts occupy residues 1 to 11 (MARRRMGEEGK) and 47 to 67 (GRREEDDAGGREKGEKRERKG). 2 disordered regions span residues 1–21 (MARRRMGEEGKGGGWGLNGRQ) and 35–103 (GWRS…RAER). Residues 75–86 (GKRRRERRRGGR) are compositionally biased toward basic residues. Residue Tyr-183 coordinates a beta-D-glucoside. Cys-191 and Cys-196 are oxidised to a cystine. Residues Glu-254, Trp-301, 308 to 309 (EW), and Phe-317 each bind a beta-D-glucoside. Glu-254 functions as the Nucleophile in the catalytic mechanism. N-linked (GlcNAc...) asparagine glycosylation is present at Asn-346.

Belongs to the glycosyl hydrolase 1 family.

The catalysed reaction is Hydrolysis of terminal, non-reducing beta-D-glucosyl residues with release of beta-D-glucose.. This Oryza sativa subsp. japonica (Rice) protein is Putative beta-glucosidase 15 (BGLU15).